The primary structure comprises 101 residues: Integration host factor subunit alpha (101 aa).

The protein belongs to the bacterial histone-like protein family. As to quaternary structure, heterodimer of an alpha and a beta chain.

Functionally, this protein is one of the two subunits of integration host factor, a specific DNA-binding protein that functions in genetic recombination as well as in transcriptional and translational control. This Dinoroseobacter shibae (strain DSM 16493 / NCIMB 14021 / DFL 12) protein is Integration host factor subunit alpha.